The following is a 633-amino-acid chain: Extracellular metalloproteinase 3 (633 aa).

An N-terminal signal peptide occupies residues 1 to 18 (MHGLLLAGLLALPMNVLA). Positions 19–246 (HPAEQHASNV…VHNVVDYVAS (228 aa)) are excised as a propeptide. Asn-410 carries N-linked (GlcNAc...) asparagine glycosylation. Position 429 (His-429) interacts with Zn(2+). Glu-430 is a catalytic residue. His-433 provides a ligand contact to Zn(2+). Residues Asn-480 and Asn-622 are each glycosylated (N-linked (GlcNAc...) asparagine).

Belongs to the peptidase M36 family. It depends on Zn(2+) as a cofactor.

Its subcellular location is the secreted. Its function is as follows. Secreted metalloproteinase probably acting as a virulence factor. The polypeptide is Extracellular metalloproteinase 3 (MEP3) (Trichophyton equinum (Horse ringworm fungus)).